The following is a 166-amino-acid chain: Small ribosomal subunit protein uS5 (166 aa).

An S5 DRBM domain is found at 11-74 (LQEKLVQVNR…EAARKNMVDV (64 aa)).

It belongs to the universal ribosomal protein uS5 family. As to quaternary structure, part of the 30S ribosomal subunit. Contacts proteins S4 and S8.

Functionally, with S4 and S12 plays an important role in translational accuracy. Its function is as follows. Located at the back of the 30S subunit body where it stabilizes the conformation of the head with respect to the body. The protein is Small ribosomal subunit protein uS5 of Marinobacter nauticus (strain ATCC 700491 / DSM 11845 / VT8) (Marinobacter aquaeolei).